The sequence spans 74 residues: NADH dehydrogenase [ubiquinone] 1 alpha subcomplex assembly factor 8 (74 aa).

The CHCH domain maps to 22–69 (LAACGAEASAYGKCVQASTAPGGRLSKDLCVREFEALRSCFAAAAKKT). Short sequence motifs (cx9C motif) lie at residues 25-35 (CGAEASAYGKC) and 51-61 (CVREFEALRSC). 2 disulfide bridges follow: Cys-25-Cys-61 and Cys-35-Cys-51.

Interacts with NDUFAF5.

It is found in the mitochondrion. Its function is as follows. Involved in the assembly of mitochondrial NADH:ubiquinone oxidoreductase complex (complex I, MT-ND1). Required to stabilize NDUFAF5. The polypeptide is NADH dehydrogenase [ubiquinone] 1 alpha subcomplex assembly factor 8 (Mus musculus (Mouse)).